A 60-amino-acid chain; its full sequence is Large ribosomal subunit protein bL32 (60 aa).

The disordered stretch occupies residues 1-60 (MAVQQNKKSPSKRGMHRSHDFLVNPPTAIEPTTGESHLRHHISPNGFYRGRKILKTKADE). The span at 49–60 (RGRKILKTKADE) shows a compositional bias: basic residues.

This sequence belongs to the bacterial ribosomal protein bL32 family.

The polypeptide is Large ribosomal subunit protein bL32 (Bordetella avium (strain 197N)).